The primary structure comprises 1846 residues: C2 domain-containing protein (1846 aa).

Residues 16 to 36 (NTEKEEGKNAEINENNDPNTQ) form a disordered region. Residues 17-26 (TEKEEGKNAE) are compositionally biased toward basic and acidic residues. A compositionally biased stretch (polar residues) spans 27–36 (INENNDPNTQ). Positions 497–623 (VPRYRQRGDI…FNEKNVRRNK (127 aa)) constitute a C2 domain. 2 stretches are compositionally biased toward basic and acidic residues: residues 1193–1211 (DEHT…DNYK) and 1230–1243 (KDDH…KVSK). Disordered stretches follow at residues 1193 to 1244 (DEHT…VSKS), 1346 to 1370 (KYTI…KKQD), 1456 to 1635 (KNER…KKRV), 1652 to 1692 (NEKM…NNER), and 1827 to 1846 (EEPS…VRKN). The stretch at 1349–1506 (INEKRDDIKT…DENMKEEQKM (158 aa)) forms a coiled coil. Composition is skewed to basic and acidic residues over residues 1456–1474 (KNER…QKDK), 1481–1629 (ESRD…MRRE), 1652–1663 (NEKMKKKEEKEE), and 1670–1692 (KEDI…NNER). Positions 1834 to 1846 (SPQKKKIVIVRKN) are enriched in basic residues.

The protein resides in the membrane. Its function is as follows. Binds calcium and phospholipids. Regulates microneme secretion. In Plasmodium falciparum (isolate 3D7), this protein is C2 domain-containing protein.